Here is a 247-residue protein sequence, read N- to C-terminus: 1-(5-phosphoribosyl)-5-[(5-phosphoribosylamino)methylideneamino] imidazole-4-carboxamide isomerase (247 aa).

Residue aspartate 8 is the Proton acceptor of the active site. Aspartate 130 functions as the Proton donor in the catalytic mechanism.

It belongs to the HisA/HisF family.

The protein localises to the cytoplasm. The catalysed reaction is 1-(5-phospho-beta-D-ribosyl)-5-[(5-phospho-beta-D-ribosylamino)methylideneamino]imidazole-4-carboxamide = 5-[(5-phospho-1-deoxy-D-ribulos-1-ylimino)methylamino]-1-(5-phospho-beta-D-ribosyl)imidazole-4-carboxamide. Its pathway is amino-acid biosynthesis; L-histidine biosynthesis; L-histidine from 5-phospho-alpha-D-ribose 1-diphosphate: step 4/9. The protein is 1-(5-phosphoribosyl)-5-[(5-phosphoribosylamino)methylideneamino] imidazole-4-carboxamide isomerase of Stutzerimonas stutzeri (strain A1501) (Pseudomonas stutzeri).